The primary structure comprises 1440 residues: Gag-Pol polyprotein (1440 aa).

Glycine 2 is lipidated: N-myristoyl glycine; by host. Positions 7–31 (VLSGGKLDAWEKIRLRPGGKKKYRL) are interaction with Gp41. The segment at 8-43 (LSGGKLDAWEKIRLRPGGKKKYRLKHLVWASRELER) is interaction with host CALM1. Residues 12 to 19 (KLDAWEKI) are interaction with host AP3D1. The interval 14 to 33 (DAWEKIRLRPGGKKKYRLKH) is interaction with membrane phosphatidylinositol 4,5-bisphosphate and RNA. The Nuclear export signal motif lies at 16-22 (WEKIRLR). The Nuclear localization signal signature appears at 26–32 (KKKYRLK). The interaction with membrane phosphatidylinositol 4,5-bisphosphate stretch occupies residues 73-77 (EEIKS). Phosphotyrosine; by host is present on tyrosine 138. Residues 195–233 (NIVGGHQAAMQMLKDTINEEAADWDRVHPVHAGPIPPGQ) are interaction with human PPIA/CYPA and NUP153. The tract at residues 283 to 369 (YSPVSILDIR…GGPSHKARVL (87 aa)) is dimerization/Multimerization of capsid protein p24. 2 CCHC-type zinc fingers span residues 396 to 413 (IKCF…NCRA) and 417 to 434 (KGCW…DCTE). The segment at 494–498 (PQITL) is dimerization of protease. The Peptidase A2 domain occupies 513-582 (KEALLDTGAD…TPVNIIGRNM (70 aa)). Aspartate 518 acts as the For protease activity; shared with dimeric partner in catalysis. Dimerization of protease stretches follow at residues 542 to 548 (GIGGFIK) and 581 to 593 (NMLT…LNFP). The Reverse transcriptase domain maps to 636 to 826 (EGKILKIGPE…PPFLWMGYEL (191 aa)). Mg(2+) is bound by residues aspartate 702, aspartate 777, and aspartate 778. Residues 819-827 (FLWMGYELH) form an RT 'primer grip' region. The short motif at 990–1006 (WEAWWTEYWQATWIPEW) is the Tryptophan repeat motif element. An RNase H type-1 domain is found at 1026 to 1149 (IVGAETFYVD…VDKLVSSGIR (124 aa)). Residues aspartate 1035, glutamate 1070, aspartate 1090, and aspartate 1141 each contribute to the Mg(2+) site. The segment at 1155–1196 (DGIDKAQEEHEKYHSNWRAMASDFNLPPIVAKEIVASCDKCQ) adopts an Integrase-type zinc-finger fold. Zn(2+) is bound by residues histidine 1164, histidine 1168, cysteine 1192, and cysteine 1195. The Integrase catalytic domain maps to 1206-1356 (VDCSPGIWQL…SAGERIIDMI (151 aa)). Mg(2+) is bound by residues aspartate 1216, aspartate 1268, and glutamate 1304. Positions 1375-1422 (FRVYYRDNRDPIWKGPAKLLWKGEGAVVIQDNSDIKVVPRRKAKIIRD) form a DNA-binding region, integrase-type.

Homotrimer; further assembles as hexamers of trimers. Interacts with gp41 (via C-terminus). Interacts with host CALM1; this interaction induces a conformational change in the Matrix protein, triggering exposure of the myristate group. Interacts with host AP3D1; this interaction allows the polyprotein trafficking to multivesicular bodies during virus assembly. Part of the pre-integration complex (PIC) which is composed of viral genome, matrix protein, Vpr and integrase. In terms of assembly, homodimer; the homodimer further multimerizes as homohexamers or homopentamers. Interacts with human PPIA/CYPA; This interaction stabilizes the capsid. Interacts with human NUP153. Interacts with host PDZD8; this interaction stabilizes the capsid. Interacts with monkey TRIM5; this interaction destabilizes the capsid. As to quaternary structure, homodimer, whose active site consists of two apposed aspartic acid residues. Heterodimer of p66 RT and p51 RT (RT p66/p51). Heterodimerization of RT is essential for DNA polymerase activity. The overall folding of the subdomains is similar in p66 RT and p51 RT but the spatial arrangements of the subdomains are dramatically different. In terms of assembly, homotetramer; may further associate as a homohexadecamer. Part of the pre-integration complex (PIC) which is composed of viral genome, matrix protein, Vpr and integrase. Interacts with human SMARCB1/INI1 and human PSIP1/LEDGF isoform 1. Interacts with human KPNA3; this interaction might play a role in nuclear import of the pre-integration complex. Interacts with human NUP153; this interaction might play a role in nuclear import of the pre-integration complex. Requires Mg(2+) as cofactor. In terms of processing, specific enzymatic cleavages by the viral protease yield mature proteins. The protease is released by autocatalytic cleavage. The polyprotein is cleaved during and after budding, this process is termed maturation. Proteolytic cleavage of p66 RT removes the RNase H domain to yield the p51 RT subunit. Nucleocapsid protein p7 might be further cleaved after virus entry. Tyrosine phosphorylated presumably in the virion by a host kinase. Phosphorylation is apparently not a major regulator of membrane association. Post-translationally, phosphorylated possibly by host MAPK1; this phosphorylation is necessary for Pin1-mediated virion uncoating. In terms of processing, methylated by host PRMT6, impairing its function by reducing RNA annealing and the initiation of reverse transcription.

Its subcellular location is the host cell membrane. The protein localises to the host endosome. It is found in the host multivesicular body. The protein resides in the virion membrane. It localises to the host nucleus. Its subcellular location is the host cytoplasm. The protein localises to the virion. It carries out the reaction Specific for a P1 residue that is hydrophobic, and P1' variable, but often Pro.. The enzyme catalyses Endohydrolysis of RNA in RNA/DNA hybrids. Three different cleavage modes: 1. sequence-specific internal cleavage of RNA. Human immunodeficiency virus type 1 and Moloney murine leukemia virus enzymes prefer to cleave the RNA strand one nucleotide away from the RNA-DNA junction. 2. RNA 5'-end directed cleavage 13-19 nucleotides from the RNA end. 3. DNA 3'-end directed cleavage 15-20 nucleotides away from the primer terminus.. The catalysed reaction is 3'-end directed exonucleolytic cleavage of viral RNA-DNA hybrid.. It catalyses the reaction DNA(n) + a 2'-deoxyribonucleoside 5'-triphosphate = DNA(n+1) + diphosphate. With respect to regulation, protease: The viral protease is inhibited by many synthetic protease inhibitors (PIs), such as amprenavir, atazanavir, indinavir, loprinavir, nelfinavir, ritonavir and saquinavir. Use of protease inhibitors in tritherapy regimens permit more ambitious therapeutic strategies. Reverse transcriptase/ribonuclease H: RT can be inhibited either by nucleoside RT inhibitors (NRTIs) or by non nucleoside RT inhibitors (NNRTIs). NRTIs act as chain terminators, whereas NNRTIs inhibit DNA polymerization by binding a small hydrophobic pocket near the RT active site and inducing an allosteric change in this region. Classical NRTIs are abacavir, adefovir (PMEA), didanosine (ddI), lamivudine (3TC), stavudine (d4T), tenofovir (PMPA), zalcitabine (ddC), and zidovudine (AZT). Classical NNRTIs are atevirdine (BHAP U-87201E), delavirdine, efavirenz (DMP-266), emivirine (I-EBU), and nevirapine (BI-RG-587). The tritherapies used as a basic effective treatment of AIDS associate two NRTIs and one NNRTI. Its function is as follows. Mediates, with Gag polyprotein, the essential events in virion assembly, including binding the plasma membrane, making the protein-protein interactions necessary to create spherical particles, recruiting the viral Env proteins, and packaging the genomic RNA via direct interactions with the RNA packaging sequence (Psi). Gag-Pol polyprotein may regulate its own translation, by the binding genomic RNA in the 5'-UTR. At low concentration, the polyprotein would promote translation, whereas at high concentration, the polyprotein would encapsidate genomic RNA and then shut off translation. Targets the polyprotein to the plasma membrane via a multipartite membrane-binding signal, that includes its myristoylated N-terminus. Matrix protein is part of the pre-integration complex. Implicated in the release from host cell mediated by Vpu. Binds to RNA. In terms of biological role, forms the conical core that encapsulates the genomic RNA-nucleocapsid complex in the virion. Most core are conical, with only 7% tubular. The core is constituted by capsid protein hexamer subunits. The core is disassembled soon after virion entry. Host restriction factors such as TRIM5-alpha or TRIMCyp bind retroviral capsids and cause premature capsid disassembly, leading to blocks in reverse transcription. Capsid restriction by TRIM5 is one of the factors which restricts HIV-1 to the human species. Host PIN1 apparently facilitates the virion uncoating. On the other hand, interactions with PDZD8 or CYPA stabilize the capsid. Functionally, encapsulates and protects viral dimeric unspliced genomic RNA (gRNA). Binds these RNAs through its zinc fingers. Acts as a nucleic acid chaperone which is involved in rearangement of nucleic acid secondary structure during gRNA retrotranscription. Also facilitates template switch leading to recombination. As part of the polyprotein, participates in gRNA dimerization, packaging, tRNA incorporation and virion assembly. Its function is as follows. Aspartyl protease that mediates proteolytic cleavages of Gag and Gag-Pol polyproteins during or shortly after the release of the virion from the plasma membrane. Cleavages take place as an ordered, step-wise cascade to yield mature proteins. This process is called maturation. Displays maximal activity during the budding process just prior to particle release from the cell. Also cleaves Nef and Vif, probably concomitantly with viral structural proteins on maturation of virus particles. Hydrolyzes host EIF4GI and PABP1 in order to shut off the capped cellular mRNA translation. The resulting inhibition of cellular protein synthesis serves to ensure maximal viral gene expression and to evade host immune response. Also mediates cleavage of host YTHDF3. Mediates cleavage of host CARD8, thereby activating the CARD8 inflammasome, leading to the clearance of latent HIV-1 in patient CD4(+) T-cells after viral reactivation; in contrast, HIV-1 can evade CARD8-sensing when its protease remains inactive in infected cells prior to viral budding. Multifunctional enzyme that converts the viral RNA genome into dsDNA in the cytoplasm, shortly after virus entry into the cell. This enzyme displays a DNA polymerase activity that can copy either DNA or RNA templates, and a ribonuclease H (RNase H) activity that cleaves the RNA strand of RNA-DNA heteroduplexes in a partially processive 3' to 5' endonucleasic mode. Conversion of viral genomic RNA into dsDNA requires many steps. A tRNA(3)-Lys binds to the primer-binding site (PBS) situated at the 5'-end of the viral RNA. RT uses the 3' end of the tRNA primer to perform a short round of RNA-dependent minus-strand DNA synthesis. The reading proceeds through the U5 region and ends after the repeated (R) region which is present at both ends of viral RNA. The portion of the RNA-DNA heteroduplex is digested by the RNase H, resulting in a ssDNA product attached to the tRNA primer. This ssDNA/tRNA hybridizes with the identical R region situated at the 3' end of viral RNA. This template exchange, known as minus-strand DNA strong stop transfer, can be either intra- or intermolecular. RT uses the 3' end of this newly synthesized short ssDNA to perform the RNA-dependent minus-strand DNA synthesis of the whole template. RNase H digests the RNA template except for two polypurine tracts (PPTs) situated at the 5'-end and near the center of the genome. It is not clear if both polymerase and RNase H activities are simultaneous. RNase H probably can proceed both in a polymerase-dependent (RNA cut into small fragments by the same RT performing DNA synthesis) and a polymerase-independent mode (cleavage of remaining RNA fragments by free RTs). Secondly, RT performs DNA-directed plus-strand DNA synthesis using the PPTs that have not been removed by RNase H as primers. PPTs and tRNA primers are then removed by RNase H. The 3' and 5' ssDNA PBS regions hybridize to form a circular dsDNA intermediate. Strand displacement synthesis by RT to the PBS and PPT ends produces a blunt ended, linear dsDNA copy of the viral genome that includes long terminal repeats (LTRs) at both ends. In terms of biological role, catalyzes viral DNA integration into the host chromosome, by performing a series of DNA cutting and joining reactions. This enzyme activity takes place after virion entry into a cell and reverse transcription of the RNA genome in dsDNA. The first step in the integration process is 3' processing. This step requires a complex comprising the viral genome, matrix protein, Vpr and integrase. This complex is called the pre-integration complex (PIC). The integrase protein removes 2 nucleotides from each 3' end of the viral DNA, leaving recessed CA OH's at the 3' ends. In the second step, the PIC enters cell nucleus. This process is mediated through integrase and Vpr proteins, and allows the virus to infect a non dividing cell. This ability to enter the nucleus is specific of lentiviruses, other retroviruses cannot and rely on cell division to access cell chromosomes. In the third step, termed strand transfer, the integrase protein joins the previously processed 3' ends to the 5' ends of strands of target cellular DNA at the site of integration. The 5'-ends are produced by integrase-catalyzed staggered cuts, 5 bp apart. A Y-shaped, gapped, recombination intermediate results, with the 5'-ends of the viral DNA strands and the 3' ends of target DNA strands remaining unjoined, flanking a gap of 5 bp. The last step is viral DNA integration into host chromosome. This involves host DNA repair synthesis in which the 5 bp gaps between the unjoined strands are filled in and then ligated. Since this process occurs at both cuts flanking the HIV genome, a 5 bp duplication of host DNA is produced at the ends of HIV-1 integration. Alternatively, Integrase may catalyze the excision of viral DNA just after strand transfer, this is termed disintegration. The sequence is that of Gag-Pol polyprotein (gag-pol) from Human immunodeficiency virus type 1 group M subtype A (isolate MAL) (HIV-1).